The chain runs to 32 residues: Peptide II.10.10 (32 aa).

3 disulfide bridges follow: cysteine 5/cysteine 24, cysteine 10/cysteine 29, and cysteine 14/cysteine 31.

The protein belongs to the short scorpion toxin superfamily. Potassium channel inhibitor family. Alpha-KTx 10 subfamily. In terms of tissue distribution, expressed by the venom gland.

The protein localises to the secreted. This is Peptide II.10.10 from Centruroides tecomanus (Scorpion).